The sequence spans 558 residues: MAGPLPPLNQEAAFQKLQEYYDSSGKDLNIKDLFVKDAKRFSKYSLRLHTQNDGEILLDYSKNRINDEVWDLLLALAKVRRVDAARDAMFSGQHINITENRAVLHTALRNRGTDPVLVDDKDVMPDVRAELAHMKEFTNMVISGVWRGCTGKQITDVVNIGIGGSDLGPLMVTEALKPYGKGLHSHFVSNIDGTHLAEVLKKVNYETTLFIVASKTFTTQETITNATSAKTWLLEHSKEPESVAKHFVALSTNKEKVTEFGIDSTNMFGFWDWVGGRYSLWSAIGLSICLSIGFENFEQLLDGAHYMDNHFRTTPLEKNAPVILALLGVWYSNFFKAETHALLPYDQYLHRFAAYFQQGDMESNGKFVSKAGKAVKYSTGPIVWGEPGTNGQHAFYQLIHQGTRLIPCDFIAPAQTHNPIAGGKHHKILLSNFLAQTEALMAGKTVDEARAELSKAGLCGNELDNLLPHKVFVGNRPTNSIVVKKVSPFTLGALIALYEHKIFVQGIIWDINSFDQWGVELGKQLAKAIEPELDHCNEVSTHDSSTNGLINFIKANWK.

The active-site Proton donor is the Glu-362. Catalysis depends on residues His-393 and Lys-523.

Belongs to the GPI family.

Its subcellular location is the cytoplasm. It catalyses the reaction alpha-D-glucose 6-phosphate = beta-D-fructose 6-phosphate. Its pathway is carbohydrate degradation; glycolysis; D-glyceraldehyde 3-phosphate and glycerone phosphate from D-glucose: step 2/4. This is Glucose-6-phosphate isomerase (Pgi) from Drosophila yakuba (Fruit fly).